The chain runs to 32 residues: Potassium channel toxin alpha-KTx 9.4 (32 aa).

Disulfide bonds link Cys3–Cys19, Cys6–Cys24, and Cys10–Cys26.

Expressed by the venom gland.

It localises to the secreted. Its function is as follows. Blocker of human voltage-gated potassium channel Kv1.1/KCNA1. This is Potassium channel toxin alpha-KTx 9.4 from Hottentotta tamulus (Eastern Indian scorpion).